The following is a 443-amino-acid chain: Nuclear distribution protein nudF (443 aa).

Positions 9–41 (QAEELHKSIIAYLSSINASRSCEVLREELQVDS) constitute a LisH domain. Residues 60–87 (TGIARLQKKILDLESKLAGLQTELDTIS) are a coiled coil. WD repeat units follow at residues 111–152 (SHRD…RTLK), 154–194 (HMRP…ANVR), 198–238 (GHDH…CVKV), 241–280 (SQGS…SVAS), 283–343 (GHEN…IKTL), 345–384 (GHDN…RLVK), 388–427 (AHGH…PGFQ), and 429–443 (VIAT…RIFT).

This sequence belongs to the WD repeat LIS1/nudF family. As to quaternary structure, self-associates. Interacts with nudE and dynein.

It is found in the cytoplasm. Its subcellular location is the cytoskeleton. The protein localises to the spindle pole. In terms of biological role, positively regulates the activity of the minus-end directed microtubule motor protein dynein. May enhance dynein-mediated microtubule sliding by targeting dynein to the microtubule plus end. Required for nuclear migration during vegetative growth as well as development. Required for retrograde early endosome (EE) transport from the hyphal tip. Required for localization of dynein to the mitotic spindle poles. Recruits additional proteins to the dynein complex at SPBs. This Aspergillus niger (strain ATCC MYA-4892 / CBS 513.88 / FGSC A1513) protein is Nuclear distribution protein nudF.